Reading from the N-terminus, the 115-residue chain is Non-specific lipid-transfer protein Cw18 (115 aa).

Residues 1-25 (MARTAATKLALVALVAAMLLVAADA) form the signal peptide. Cystine bridges form between Cys-29–Cys-77, Cys-39–Cys-54, Cys-55–Cys-97, and Cys-75–Cys-111.

Belongs to the plant LTP family. In terms of tissue distribution, highly expressed in leaves and coleoptiles. No expression in roots.

Functionally, plant non-specific lipid-transfer proteins transfer phospholipids as well as galactolipids across membranes. May play a role in wax or cutin deposition in the cell walls of expanding epidermal cells and certain secretory tissues. The sequence is that of Non-specific lipid-transfer protein Cw18 (CW18) from Hordeum vulgare (Barley).